We begin with the raw amino-acid sequence, 430 residues long: MPISLEYLGPAQAPASVGDFYFLRHGKTDLNEKEVFVQGEKHWGVQGAGTNIGLNETGKRQAVLAGNVLRKLPISSVVCSPLLRAIQTAVIANIGCLCFEIDDDLKERDFGKHEGGYGPLKMFEENYPDTENTELFSMRVAKALAHAETENTLFVSHGGVLRVVAALLGVELTKEHTDNGRVLHFRRGCPQWTVEIHQSPVILISGPSRGIGKAIAENLIAHGYRMSLGARRVKDLESAFGPQSEWLHYARFDAEDNDTMAAWVTAAVEKFGRIDGLINNAGCGEPVNLEKDIDYKQFHRQWHINCVAPLRMTELCLPYLCETGSGRVVNINSMSGQRVLNPFVGYNMTKHALGGLTKTTQHVGWDRGVRAIDICPGFVATEMSAWTDLISSNDMIQPNDIANLVREAIERPNRAYVPRSEVMCMKESIH.

NAD(+) is bound at residue 203–227 (LISGPSRGIGKAIAENLIAHGYRMS). Ser-333 provides a ligand contact to substrate. The active-site Proton acceptor is Tyr-346.

Belongs to the short-chain dehydrogenases/reductases (SDR) family.

It functions in the pathway opine metabolism; mannopine biosynthesis. Functionally, reduces deoxy-fructosyl-glutamine to mannopine. The chain is Agropine synthesis reductase (mas1) from Rhizobium rhizogenes (Agrobacterium rhizogenes).